A 118-amino-acid chain; its full sequence is Small ribosomal subunit protein uS13 (118 aa).

The segment at 93 to 118 (RGLPVRGQRTKTNARTRKGPRKPIRK) is disordered.

It belongs to the universal ribosomal protein uS13 family. Part of the 30S ribosomal subunit. Forms a loose heterodimer with protein S19. Forms two bridges to the 50S subunit in the 70S ribosome.

Functionally, located at the top of the head of the 30S subunit, it contacts several helices of the 16S rRNA. In the 70S ribosome it contacts the 23S rRNA (bridge B1a) and protein L5 of the 50S subunit (bridge B1b), connecting the 2 subunits; these bridges are implicated in subunit movement. Contacts the tRNAs in the A and P-sites. This Pseudomonas paraeruginosa (strain DSM 24068 / PA7) (Pseudomonas aeruginosa (strain PA7)) protein is Small ribosomal subunit protein uS13.